The following is a 413-amino-acid chain: Isobutyryl-CoA dehydrogenase, mitochondrial (413 aa).

Residues 1–20 (MAMLRSGYRRFGCLRAALKS) constitute a mitochondrion transit peptide. The residue at position 48 (Lys48) is an N6-acetyllysine; alternate. N6-succinyllysine; alternate is present on Lys48. Residues 156 to 165 (YCLTEPGSGS) and 189 to 191 (FIS) each bind FAD. Ser165 lines the substrate pocket. Residue Lys211 is modified to N6-succinyllysine. Lys229 is modified (N6-acetyllysine). Position 269 is an N6-succinyllysine (Lys269). Residue 272 to 275 (NGGR) participates in substrate binding. FAD-binding positions include Arg300, 310–311 (SQ), and 369–373 (QMHGG). Residue Glu396 is the Proton acceptor of the active site. Residue 398–400 (SNE) participates in FAD binding. Arg408 lines the substrate pocket.

It belongs to the acyl-CoA dehydrogenase family. Homotetramer, formed by a dimer of dimers. FAD is required as a cofactor.

Its subcellular location is the mitochondrion. The catalysed reaction is 2-methylpropanoyl-CoA + oxidized [electron-transfer flavoprotein] + H(+) = 2-methylpropenoyl-CoA + reduced [electron-transfer flavoprotein]. It carries out the reaction (2S)-2-methylbutanoyl-CoA + oxidized [electron-transfer flavoprotein] + H(+) = (2E)-2-methylbut-2-enoyl-CoA + reduced [electron-transfer flavoprotein]. The enzyme catalyses propanoyl-CoA + oxidized [electron-transfer flavoprotein] + H(+) = acryloyl-CoA + reduced [electron-transfer flavoprotein]. Its pathway is amino-acid degradation; L-valine degradation. Isobutyryl-CoA dehydrogenase which catalyzes the conversion of 2-methylpropanoyl-CoA to (2E)-2-methylpropenoyl-CoA in the valine catabolic pathway. To a lesser extent, also able to catalyze the oxidation of (2S)-2-methylbutanoyl-CoA. The protein is Isobutyryl-CoA dehydrogenase, mitochondrial of Mus musculus (Mouse).